A 474-amino-acid polypeptide reads, in one-letter code: Rhodanese-like domain-containing protein 7 (474 aa).

Disordered stretches follow at residues 20-68 (SSPP…SSLK) and 179-198 (VSPEQEAIHHGHSSSSPLAA). Positions 53–68 (QSQPHKLSSSPSSSLK) are enriched in low complexity. Residues 245–368 (SDPETVVIDV…YLEEVPKTES (124 aa)) enclose the Rhodanese domain. Cys-328 functions as the Cysteine persulfide intermediate in the catalytic mechanism. The disordered stretch occupies residues 432 to 474 (RARARQTQFEEWGVIGGPDKGRRPATKPDSPRKKINAKLGSSI).

The sequence is that of Rhodanese-like domain-containing protein 7 (STR7) from Arabidopsis thaliana (Mouse-ear cress).